The following is a 443-amino-acid chain: MVTKAKTARTPTVGFVSLGCPKATVDSERILTQLRAEGYGIVGSYDDADVVVVNTCGFIDAAVQESLEAIGEAIAENGKVIVTGCLGAKGELIREVHPKVLAVSGPHALDEVMEAVHGALPKPHDPFADLIPPGGIKLTPRHYAYLKISEGCNHRCSFCIIPSMRGDLVSRPIGEVMHEAEALVSAGVQELLVVSQDTSAYGVDVKYRPGFWGGRPVKTRMTELARALGSLGAWVRLHYVYPYPSVDDVIPLMADGVILPYLDIPFQHASPRILKLMKRPGAVEKTLDRIHAWRAAVPELTLRSTFIVGFPGETDPEFEELLDFLKHAQLDRVGCFKYSPIEGAVANELPDPVPEELKDERLERFMETQAEISAARLDAKIGRTIEVLVDEEDEVGTLARSHADAPEIDGVVYLEGVFGLKPGTRLTVKVDEADAHDLWATPV.

In terms of domain architecture, MTTase N-terminal spans 11–121 (PTVGFVSLGC…VMEAVHGALP (111 aa)). 6 residues coordinate [4Fe-4S] cluster: cysteine 20, cysteine 56, cysteine 85, cysteine 152, cysteine 156, and cysteine 159. The 238-residue stretch at 138–375 (LTPRHYAYLK…METQAEISAA (238 aa)) folds into the Radical SAM core domain. The region spanning 378–443 (DAKIGRTIEV…DAHDLWATPV (66 aa)) is the TRAM domain.

The protein belongs to the methylthiotransferase family. RimO subfamily. [4Fe-4S] cluster is required as a cofactor.

Its subcellular location is the cytoplasm. The catalysed reaction is L-aspartate(89)-[ribosomal protein uS12]-hydrogen + (sulfur carrier)-SH + AH2 + 2 S-adenosyl-L-methionine = 3-methylsulfanyl-L-aspartate(89)-[ribosomal protein uS12]-hydrogen + (sulfur carrier)-H + 5'-deoxyadenosine + L-methionine + A + S-adenosyl-L-homocysteine + 2 H(+). Functionally, catalyzes the methylthiolation of an aspartic acid residue of ribosomal protein uS12. The sequence is that of Ribosomal protein uS12 methylthiotransferase RimO from Thiobacillus denitrificans (strain ATCC 25259 / T1).